A 161-amino-acid chain; its full sequence is Ribonuclease H (161 aa).

The RNase H type-1 domain maps to 3-144; it reads VLKQLSIFTD…CDTLARVAAE (142 aa). Mg(2+)-binding residues include Asp-12, Glu-50, Asp-72, and Asp-136.

Belongs to the RNase H family. Monomer. The cofactor is Mg(2+).

It is found in the cytoplasm. The catalysed reaction is Endonucleolytic cleavage to 5'-phosphomonoester.. In terms of biological role, endonuclease that specifically degrades the RNA of RNA-DNA hybrids. This is Ribonuclease H from Shewanella woodyi (strain ATCC 51908 / MS32).